The following is a 239-amino-acid chain: IkB-like protein (239 aa).

ANK repeat units follow at residues 48–80, 87–118, 124–153, and 158–187; these read SKIT…EIIS, DGNS…GIKV, NGIT…NPNQ, and KGFN…KPLF. Residues 81 to 87 carry the Nuclear localization signal motif; sequence HYRRDKD. A Nuclear localization signal motif is present at residues 203–214; sequence KKKPKIIITSCE. The short motif at 206-213 is the PxIxITxC motif; Interaction with host PPP3CA element; that stretch reads PKIIITSC. An FLCV motif motif is present at residues 228–231; the sequence is FLCV.

This sequence belongs to the asfivirus A238L family. Interacts with host PPIA. Interacts with host PPP3CA/Calcineurin. Interacts with host RELA/p65; interaction of the 32 kDa form with host RELA results in the formation of a stable complex with NF-kappa-B. Interacts with host PPP3R1. Interacts with host EP300; this interaction inhibits the association of host EP300 with host RELA, JUN and NFATC2. The protein exists in a 28 kDa and a 32 kDa form, probably due to post-translational modifications which are neither phosphorylation, nor sumoylation.

The protein localises to the host nucleus. It is found in the host cytoplasm. Functionally, ikB-like protein that inhibits the binding of NF-kappa-B to DNA, thereby downregulating pro-inflammatory cytokine production. Forms a heterodimer with the NF-kappa-B subunit RELA/p65 and prevents the activation of the NF-kappa-B transcription factor. Inhibits calcineurin function, which is required for the induction of nuclear factor of activated T cells (NFAT)-dependent immune response genes. Prevents the binding of substrates to calcineurin without affecting the phosphatase activity. Does not contain the serine residues that are phosphorylated by host IkB kinase and thus is not degraded following stimulation of the NFkB pathway. This chain is IkB-like protein (A238L), found in Ornithodoros (relapsing fever ticks).